The chain runs to 450 residues: MSDSGTLSLIGGIVFLVLWVVVWSICLLGWRTARIRYAHPNIPSRLSKLPVSSAPGVTIIRPLCGLDQNLYNTLESVMKLDYPKFEVIFAVQDEKDEALPVVNMVMEKYPEVEAKVIIDSRKVGVNPKVNNLMTPFQEAKYDLLWILDSTCSVLPGTLGRSVEAFFSNTSSTASPYDPESSPLLSISDDVRKPPIAGEVGLVHQVPIAVCYQKTWGSLIEQAYLNTTHAKMYLAINATSIDSCVVGKSCMYSRDNISHLTTPSPSLRSLPDPPSGLAGFGPFLAEDNMIGLSLWHELKLKHAMTSDVVLDFIGSLSVRDYINRRVRWIRVRKKMTLAATLLEPLTESIISGLYGAWAISRLLGGNILPLFLLHMAAWISVDISTKRALETNIKGIGPPESKVTFLMAWAARECLALPIWMLAMTSSEVVWRGQKYKIIASGEAIRLGDRN.

Over 1 to 8 (MSDSGTLS) the chain is Lumenal. Residues 9-29 (LIGGIVFLVLWVVVWSICLLG) form a helical membrane-spanning segment. Residues 30–337 (WRTARIRYAH…IRVRKKMTLA (308 aa)) lie on the Cytoplasmic side of the membrane. Position 96 (Asp96) is a short sequence motif, D1. Position 148 (Asp148) is a short sequence motif, D2. A short sequence motif (D3) is located at residue Asp286. The active-site Proton acceptor is Asp286. Positions 323–327 (RRVRW) match the (Q/R)XXRW motif. Residues 338–358 (ATLLEPLTESIISGLYGAWAI) traverse the membrane as a helical segment. The Lumenal segment spans residues 359–361 (SRL). Residues 362-382 (LGGNILPLFLLHMAAWISVDI) traverse the membrane as a helical segment. The Cytoplasmic segment spans residues 383 to 401 (STKRALETNIKGIGPPESK). The helical transmembrane segment at 402–422 (VTFLMAWAARECLALPIWMLA) threads the bilayer. Over 423-450 (MTSSEVVWRGQKYKIIASGEAIRLGDRN) the chain is Lumenal.

The protein belongs to the glycosyltransferase 2 family.

Its subcellular location is the golgi apparatus membrane. The enzyme catalyses an N-acylsphing-4-enine + UDP-alpha-D-glucose = a beta-D-glucosyl-(1&lt;-&gt;1')-N-acylsphing-4-enine + UDP + H(+). It participates in lipid metabolism; sphingolipid metabolism. Functionally, catalyzes the final step in the biosynthesis of the membrane lipid glucosylceramide (GluCer), the transfer of glucose to ceramide. Glucosylceramides play important roles in growth, differentiation and pathogenicity. Essential factor in determining the success of fungal infection by regulating survival of yeast cells during the initial colonization of the host lung. The sequence is that of Ceramide glucosyltransferase from Cryptococcus neoformans var. grubii serotype A (strain H99 / ATCC 208821 / CBS 10515 / FGSC 9487) (Filobasidiella neoformans var. grubii).